The following is a 422-amino-acid chain: O-mycaminosyltylonolide 6-deoxyallosyltransferase (422 aa).

The protein belongs to the glycosyltransferase 28 family.

It carries out the reaction 5-O-beta-D-mycaminosyltylonolide + dTDP-6-deoxy-alpha-D-allose = demethyllactenocin + dTDP + H(+). Involved in the biosynthesis of the macrolide antibiotic tylosin derived from the polyketide lactone tylactone. Catalyzes the transfer of 6-deoxy-alpha-D-allose from dTDP-6-deoxy-alpha-D-allose to O-mycaminosyltylonolide (OMT) to yield demethyllactenocin. The protein is O-mycaminosyltylonolide 6-deoxyallosyltransferase of Streptomyces fradiae (Streptomyces roseoflavus).